The following is an 87-amino-acid chain: Developmentally-regulated ectodermal protein (87 aa).

The first 16 residues, 1–16, serve as a signal peptide directing secretion; sequence MKRLLVLTLVSAILMA.

This Tripneustes gratilla (Hawaian sea urchin) protein is Developmentally-regulated ectodermal protein.